The sequence spans 1006 residues: MSNIKLGVEVISAQGLLQRDKHNSCSPFVELKFDNQIFRATTKHNDPNPVWHECFYFVVSDPSVLSTRTLEAHVYSYQNEFDAKPFLGKVRVNGTSFVPRSEAAPFNYPLEKRSVFSRARGELCLRVFITDDPSVTPSVPTPVPESPQAYSPSPRKEHVKSLITADASMATDERRELKPKTRTFHNSAPLVKQQPMMNYGIHEMRAAPMPPRVVQVNGPGPSLHQLPPDFSVKETSPLLGGGRIVGGRVVRGTERPTSGTYDLVEEMKFLYVRVVKARDLPNKDLTGSLDPYVVVKIGNFKGVTTHFNKNTDPEWNQVFAFAKDNLQSNFLEVMVKDKDILLDDFVGIVKFDLREVQSRVPPDSPLAPQWYRLENKRGEKKNYEIMLAVWSGTQADEAFGDATFSDSLVDSDSSNIISANLRSKVYHSPRLWYLRVQILEAQDVIIVSDKSRVPEVFVRVKVGNQMLRTKFPQRSNNPKWGDEFTFVVAEPFEDNLVLSVEDHTAPNRDEPVGKAVILMNDIEKRIDDKPFHDRWVHLEDSISDAMDVDKAKKVKFATRLRYKAVLDGGYHVFDESMYNSSDLRPSSRKLWKPAIGVLELGILNANVFHSMKTREGKGTSDTYVVAKYGHKWVRSRTVINSMNPKYNEQYTWEVFDPATVLTICVFDNAHFAAGDGGNKRDQPIGKVRIRLSTLQTGRVYTHAYPLLVLQPTGLKKRGELHLAVRFTCTSVSSMLMKYTKPLLPKMHYILPLSTNQQEALKMQAINIIIVRLGRSEPPLRREVVDYLTDWKSQLFSMRRSKANFNRFTTVFSGALSVWKWMEQVCTWKTPVTTALVHVLYTMLVTFPEMILPTVFLYMAVIGMWNYRFKPRFPPHMDAKLSYADNVNSDELDEEFDTFPTVRAPDIVKMRYDRLRSVAGKVQSVAGDIAAQGERVQALLSWRDPRATAIFVTFCFIIAMALYITPFKLVALLSGYYFMRHPKLRHRIPSAPVNFFRRLPAMTDSML.

A C2 1 domain is found at 1–108 (MSNIKLGVEV…PRSEAAPFNY (108 aa)). A disordered region spans residues 135 to 156 (VTPSVPTPVPESPQAYSPSPRK). C2 domains are found at residues 251-371 (RGTE…PQWY), 411-536 (SDSS…DRWV), and 579-704 (NSSD…THAY). Aspartate 284, aspartate 290, aspartate 337, aspartate 339, and aspartate 344 together coordinate Ca(2+). The next 2 membrane-spanning stretches (helical) occupy residues 842–862 (MLVT…AVIG) and 946–966 (ATAI…ITPF).

It belongs to the MCTP family. Ca(2+) is required as a cofactor. Expressed in incipient leaf primordia and roots meristems. Observed in flowers.

Its subcellular location is the cell membrane. It is found in the cytoplasm. In terms of biological role, may function as a signaling molecule by regulating the trafficking of other regulators. This Arabidopsis thaliana (Mouse-ear cress) protein is Multiple C2 domain and transmembrane region protein 9.